A 454-amino-acid polypeptide reads, in one-letter code: Guanine deaminase (454 aa).

2 residues coordinate Zn(2+): H82 and H84. Residues 84–87, 213–214, 240–243, and D330 contribute to the substrate site; these read HASQ, RF, and HISE. 2 residues coordinate Zn(2+): H240 and D330. S453 carries the phosphoserine modification.

The protein belongs to the metallo-dependent hydrolases superfamily. ATZ/TRZ family. Homodimer. Zn(2+) serves as cofactor.

It carries out the reaction guanine + H2O + H(+) = xanthine + NH4(+). Its pathway is purine metabolism; guanine degradation; xanthine from guanine: step 1/1. Its function is as follows. Catalyzes the hydrolytic deamination of guanine, producing xanthine and ammonia. In Pongo abelii (Sumatran orangutan), this protein is Guanine deaminase (GDA).